The primary structure comprises 307 residues: Small ribosomal subunit biogenesis GTPase RsgA (307 aa).

In terms of domain architecture, CP-type G spans 80 to 237 (KADLRQTIVS…IVDTPGIKEF (158 aa)). Residues 129–132 (NKID) and 180–188 (GQSGVGKSS) each bind GTP. The Zn(2+) site is built by Cys-261, Cys-266, His-268, and Cys-274.

Belongs to the TRAFAC class YlqF/YawG GTPase family. RsgA subfamily. In terms of assembly, monomer. Associates with 30S ribosomal subunit, binds 16S rRNA. The cofactor is Zn(2+).

Its subcellular location is the cytoplasm. Its function is as follows. One of several proteins that assist in the late maturation steps of the functional core of the 30S ribosomal subunit. Helps release RbfA from mature subunits. May play a role in the assembly of ribosomal proteins into the subunit. Circularly permuted GTPase that catalyzes slow GTP hydrolysis, GTPase activity is stimulated by the 30S ribosomal subunit. The protein is Small ribosomal subunit biogenesis GTPase RsgA of Borreliella afzelii (strain PKo) (Borrelia afzelii).